Reading from the N-terminus, the 180-residue chain is MNLCGSRGEHPGGEYAGLYCTRHDTPAHQALMNDAERYFAAALCAISTEAYEAFIHSPSERPCASLWGRAKDAFGRMCGELAADRQRPPSVPPIRRAVLSLLREQCMPDPQSHLELSERLILMAYWCCLGHAGLPTIGLSPDNKCIRAELYDRPGGICHRLFDAYLGCGSLGVPRTYERS.

Belongs to the herpesviridae US10 family. Post-translationally, phosphorylated.

The protein localises to the virion tegument. The protein resides in the host nucleus matrix. The polypeptide is Virion protein US10 homolog (64) (Varicella-zoster virus (strain Dumas) (HHV-3)).